Reading from the N-terminus, the 150-residue chain is Lipoprotein signal peptidase (150 aa).

Helical transmembrane passes span 59–79 (VFVGVTVLVAIIILAAYRYLP) and 84–101 (LLRLSLALMLGGALGNLI). Active-site residues include Asp111 and Asp125. Residues 117-137 (IWPVFNLADMAIVFGVIILCW) traverse the membrane as a helical segment.

It belongs to the peptidase A8 family.

Its subcellular location is the cell membrane. It carries out the reaction Release of signal peptides from bacterial membrane prolipoproteins. Hydrolyzes -Xaa-Yaa-Zaa-|-(S,diacylglyceryl)Cys-, in which Xaa is hydrophobic (preferably Leu), and Yaa (Ala or Ser) and Zaa (Gly or Ala) have small, neutral side chains.. The protein operates within protein modification; lipoprotein biosynthesis (signal peptide cleavage). Its function is as follows. This protein specifically catalyzes the removal of signal peptides from prolipoproteins. This is Lipoprotein signal peptidase from Moorella thermoacetica (strain ATCC 39073 / JCM 9320).